A 3966-amino-acid polypeptide reads, in one-letter code: Histone-lysine N-methyltransferase 2A (3966 aa).

Disordered stretches follow at residues 1-106 (MAHS…LLRV) and 130-231 (VFGE…GVKI). Positions 6-25 (RWRFPARPGTTGGGGGGGRR) match the Menin-binding motif (MBM) motif. Over residues 15 to 29 (TTGGGGGGGRRGLGG) the composition is skewed to gly residues. Residues 75 to 102 (GAAAASAASSSSASSSSSSSSSASSGPA) are compositionally biased toward low complexity. The Integrase domain-binding motif 1 (IBM1) motif lies at 121–132 (GTNLRRFRAVFG). Phosphoserine; by CK2 is present on residues Ser134 and Ser140. The Integrase domain-binding motif 2 (IBM2) motif lies at 145–150 (QFLGFG). At Ser151 the chain carries Phosphoserine. A DNA-binding region (a.T hook 1) is located at residues 167–178 (KASPRKPRGRPR). The residue at position 195 (Ser195) is a Phosphoserine. The span at 200-218 (SETKSADKIKKKDSKSIEK) shows a compositional bias: basic and acidic residues. The a.T hook 2 DNA-binding region spans 215-225 (SIEKKRGRPPT). Lys237 is modified (N6-acetyllysine). Positions 299 to 307 (RRRGRPPST) form a DNA-binding region, a.T hook 3. The segment at 322–343 (LEKPQKVRKDKEGTPPLTKEDK) is disordered. At Lys371 the chain carries N6-acetyllysine. Positions 440-590 (RLESTPNSRF…PWLMPPTIPL (151 aa)) are disordered. Low complexity predominate over residues 450–489 (SATSCGSSEKSSAASQHSSQMSSDSSRSSSPSIDTTSDSQ). The residue at position 516 (Ser516) is a Phosphoserine. Residues 544–557 (LPTLQSAPQQQTSS) show a composition bias toward low complexity. Residues 558–571 (SPPPPLLTPPPPLQ) show a composition bias toward pro residues. N6-acetyllysine is present on Lys634. Ser678 carries the post-translational modification Phosphoserine. Disordered stretches follow at residues 711–943 (ESVT…ADVA), 963–1003 (RGNL…TSSI), 1034–1064 (IEKS…RGPR), and 1101–1161 (ILSS…CQVP). Low complexity-rich tracts occupy residues 717-730 (SNRT…SGVS) and 760-790 (LSTS…ASAL). Composition is skewed to polar residues over residues 791–806 (NPTF…QSGE) and 817–830 (QTSA…SNSP). Thr837 carries the post-translational modification Phosphothreonine. Basic and acidic residues predominate over residues 843 to 887 (EKGRKKDTAPEELSKDRDADKSVEKDKSRERDREREKENKRESRK). Ser923 bears the Phosphoserine mark. Positions 989–1003 (SAPSSSTVKHSTSSI) are enriched in low complexity. Residues 1040-1059 (LKQTDQPKAQGQESDSSETS) are compositionally biased toward polar residues. Ser1053 is modified (phosphoserine). Residues 1101-1111 (ILSSMGNDDKS) are compositionally biased toward basic and acidic residues. At Lys1127 the chain carries N6-acetyllysine. The segment at 1144-1192 (KKGRRSRRCGQCPGCQVPEDCGICTNCLDKPKFGGRNIKKQCCKMRKCQ) adopts a CXXC-type zinc-finger fold. Residues Cys1152, Cys1155, Cys1158, Cys1164, Cys1167, Cys1170, Cys1186, and Cys1191 each coordinate Zn(2+). Residues 1196–1390 (WMPSKASLQK…PLSNGISSKQ (195 aa)) are disordered. Positions 1217 to 1229 (SKTTEKKESKEST) are enriched in basic and acidic residues. Residues 1230–1241 (AVKSPLEPAQKA) show a composition bias toward low complexity. At Lys1232 the chain carries N6-acetyllysine. Positions 1245–1270 (PREEPAPKKSSSEPPPRKPVEEKSEE) are enriched in basic and acidic residues. Polar residues predominate over residues 1369 to 1390 (KQENAGTLNILNPLSNGISSKQ). 3 PHD-type zinc fingers span residues 1430-1481 (RVVC…CKFC), 1478-1532 (CKFC…CVRC), and 1565-1629 (GNFC…CTER). The interaction with histone H3K4me3 stretch occupies residues 1583–1599 (KMMQCGKCDRWVHSKCE). The 131-residue stretch at 1637-1767 (ALEKELQASL…SFFIRQMERV (131 aa)) folds into the Bromo domain. 2 disordered regions span residues 1665–1714 (YRQA…EGVK) and 1807–1870 (WQER…PGID). The segment covering 1828 to 1849 (APKPKGPGEPDSPTPLHPPTPP) has biased composition (pro residues). A Phosphoserine modification is found at Ser1839. A Phosphothreonine modification is found at Thr1847. The residue at position 1860 (Ser1860) is a Phosphoserine. The C2HC pre-PHD-type zinc-finger motif lies at 1872 to 1912 (NRQCALCLMYGDDSANDAGRLLYIGQNEWTHVNCALWSAEV). The PHD-type 4 zinc-finger motif lies at 1933-1980 (LRCEFCQKPGATVGCCLTSCTSNYHFMCSRAKNCVFLDDKKVYCQRHR). The 57-residue stretch at 2020 to 2076 (NIHMMIGSMTIDCLGILNDLSDCEDKLFPIGYQCSRVYWSTTDARKRCVYTCKIMEC) folds into the FYR N-terminal domain. A Phosphoserine modification is found at Ser2100. The segment at 2147–2174 (RTPSYSPTQRSPGCRPLPSAGSPTPTTH) is disordered. Thr2148 is subject to Phosphothreonine. Phosphoserine occurs at positions 2152 and 2202. Disordered stretches follow at residues 2214–2339 (VRTG…ATPG), 2371–2619 (RGQR…SARA), 2639–2673 (EDIP…SDED), and 2709–2759 (KISQ…DAGE). A compositionally biased stretch (low complexity) spans 2218 to 2230 (SAYSRSSVSSVPS). 2 stretches are compositionally biased toward polar residues: residues 2250–2284 (LSSS…SSPS) and 2308–2320 (TSSS…SAHS). Basic and acidic residues-rich tracts occupy residues 2411-2422 (ILHEHIGSSSRD) and 2430-2440 (SSKETCKEKHS). Positions 2498 to 2509 (GQSTQVEGSSKE) are enriched in polar residues. Residue Lys2524 forms a Glycyl lysine isopeptide (Lys-Gly) (interchain with G-Cter in SUMO2) linkage. The segment covering 2528–2537 (ENQSKNTQKE) has biased composition (polar residues). Position 2560 is a phosphoserine (Ser2560). Polar residues predominate over residues 2569 to 2588 (PSPNNTLSQDPQSNNYQNLP). At Ser2607 the chain carries Phosphoserine. Residues 2609 to 2618 (KRRYPRRSAR) are compositionally biased toward basic residues. Over residues 2663–2673 (GADDLSTSDED) the composition is skewed to acidic residues. A compositionally biased stretch (polar residues) spans 2722–2737 (SDTSVTATSRKSSQIP). Residues 2740–2759 (NGKENGTENLKIDRPEDAGE) show a composition bias toward basic and acidic residues. Phosphoserine is present on Ser2792. Residues 2843–2851 (SDIMDFVLK) carry the 9aaTAD motif. Ser2951 is subject to Phosphoserine. N6-acetyllysine is present on Lys2954. 2 disordered regions span residues 2958-3060 (ITEK…NAAV) and 3164-3239 (AAQS…PSNI). Positions 3012–3025 (HGNSQDLTRNSGTP) are enriched in polar residues. Ser3032 carries the post-translational modification Phosphoserine. Over residues 3035–3060 (VPVQNQKYVPSSTDSPGPSQISNAAV) the composition is skewed to polar residues. Low complexity predominate over residues 3167–3178 (SSFPPNISSPPS). Positions 3196–3212 (EANQRTDLTTTVATPSS) are enriched in polar residues. The span at 3214-3229 (LKKRPISRLHTRKNKK) shows a compositional bias: basic residues. Thr3369 is subject to Phosphothreonine. Lys3459 carries the post-translational modification N6-acetyllysine. The interval 3462 to 3640 (TLTSQRDRDP…AMEEEESGFS (179 aa)) is disordered. Over residues 3475–3487 (PGTQPSNFTQTAE) the composition is skewed to polar residues. Residues 3501–3528 (PSAKPASSASPGSSPSSGQQSGSSSVPG) show a composition bias toward low complexity. A phosphoserine mark is found at Ser3510 and Ser3523. Basic and acidic residues predominate over residues 3558–3570 (TSSEAHIPHRDTD). The 82-residue stretch at 3663 to 3744 (KKGLVFEISS…KHCRNYKFRF (82 aa)) folds into the FYR C-terminal domain. The WDR5 interaction motif (WIN) motif lies at 3759-3764 (GSARAE). The disordered stretch occupies residues 3782-3805 (HRQPPEYNPNDEEEEEVQLKSARR). In terms of domain architecture, SET spans 3826–3942 (EAVGVYRSPI…RGEELTYDYK (117 aa)). S-adenosyl-L-methionine is bound by residues His3836 and Arg3838. At Cys3879 the chain carries S-methylcysteine; by autocatalysis. S-adenosyl-L-methionine-binding positions include Tyr3880 and 3903–3904 (NH). The Zn(2+) site is built by Cys3906 and Cys3954. Residues 3950 to 3966 (NKLPCNCGAKKCRKFLN) enclose the Post-SET domain. Asn3955 is an S-adenosyl-L-methionine binding site. Cys3956 and Cys3961 together coordinate Zn(2+).

This sequence belongs to the class V-like SAM-binding methyltransferase superfamily. Histone-lysine methyltransferase family. TRX/MLL subfamily. As to quaternary structure, MLL cleavage product N320 heterodimerizes with MLL cleavage product C180 (via SET and FYRC domains). Component of some MLL1/MLL complex, at least composed of the core components KMT2A/MLL1, ASH2L, HCFC1/HCF1, HCFC2, WDR5, DPY30 and RBBP5, as well as the facultative components BACC1, CHD8, E2F6, HSP70, INO80C, KANSL1, LAS1L, MAX, MCRS1, MEN1, MGA, KAT8/MOF, PELP1, PHF20, PRP31, RING2, RUVB1/TIP49A, RUVB2/TIP49B, SENP3, TAF1, TAF4, TAF6, TAF7, TAF9 and TEX10. Interacts (via WIN motif) with WDR5; the interaction is direct. Interaction with WDR5 is required for stable interaction with ASH2L and RBBP5, and thereby also for optimal histone methyltransferase activity. Interacts with KAT8/MOF; the interaction is direct. Interacts with SBF1 and PPP1R15A. Interacts with ZNF335. Interacts with CLOCK and BMAL1 in a circadian manner. Interacts with PPIE; this results in decreased histone H3 methyltransferase activity. Interacts with CREBBP. Interacts with the WRAD complex composed of WDR5, RBBP5, ASH2L and DPY30. Interacts (via MBM motif) with MEN1. Interacts (via IBM motifs) with PSIP1 (via IBD domain) with moderate affinity whereas the KMT2A-MEN1 complex interacts with a greater affinity; MEN1 enhances interaction of KMT2A with PSIP1. Phosphorylation increases its affinity for PSIP1. Forms a complex with CREBBP and CREB1. Post-translationally, proteolytic cleavage by TASP1 generates MLL cleavage 3product N320 and MLL cleavage product C180, which reassemble through a non-covalent association. 2 cleavage sites exist, cleavage site 1 (CS1) and cleavage site 2 (CS2), to generate MLL cleavage products N320 and C180. CS2 is the major site. Phosphorylation increases its interaction with PSIP1. In terms of processing, auto-methylated at Cys-3879: auto-methylation is inhibited by the WRAD complex and unmodified histone H3.

It localises to the nucleus. It carries out the reaction L-lysyl(4)-[histone H3] + S-adenosyl-L-methionine = N(6)-methyl-L-lysyl(4)-[histone H3] + S-adenosyl-L-homocysteine + H(+). The catalysed reaction is N(6)-methyl-L-lysyl(4)-[histone H3] + S-adenosyl-L-methionine = N(6),N(6)-dimethyl-L-lysyl(4)-[histone H3] + S-adenosyl-L-homocysteine + H(+). It catalyses the reaction L-cysteinyl-[protein] + S-adenosyl-L-methionine = S-methyl-L-cysteinyl-[protein] + S-adenosyl-L-homocysteine + H(+). Histone methyltransferase that plays an essential role in early development and hematopoiesis. Catalytic subunit of the MLL1/MLL complex, a multiprotein complex that mediates both methylation of 'Lys-4' of histone H3 (H3K4me) complex and acetylation of 'Lys-16' of histone H4 (H4K16ac). Catalyzes methyl group transfer from S-adenosyl-L-methionine to the epsilon-amino group of 'Lys-4' of histone H3 (H3K4) via a non-processive mechanism. Part of chromatin remodeling machinery predominantly forms H3K4me1 and H3K4me2 methylation marks at active chromatin sites where transcription and DNA repair take place. Has weak methyltransferase activity by itself, and requires other component of the MLL1/MLL complex to obtain full methyltransferase activity. Has no activity toward histone H3 phosphorylated on 'Thr-3', less activity toward H3 dimethylated on 'Arg-8' or 'Lys-9', while it has higher activity toward H3 acetylated on 'Lys-9'. Binds to unmethylated CpG elements in the promoter of target genes and helps maintain them in the nonmethylated state. Required for transcriptional activation of HOXA9. Promotes PPP1R15A-induced apoptosis. Plays a critical role in the control of circadian gene expression and is essential for the transcriptional activation mediated by the CLOCK-BMAL1 heterodimer. Establishes a permissive chromatin state for circadian transcription by mediating a rhythmic methylation of 'Lys-4' of histone H3 (H3K4me) and this histone modification directs the circadian acetylation at H3K9 and H3K14 allowing the recruitment of CLOCK-BMAL1 to chromatin. Also has auto-methylation activity on Cys-3879 in absence of histone H3 substrate. The polypeptide is Histone-lysine N-methyltransferase 2A (Kmt2a) (Mus musculus (Mouse)).